The primary structure comprises 68 residues: Large ribosomal subunit protein bL35 (68 aa).

This sequence belongs to the bacterial ribosomal protein bL35 family.

The chain is Large ribosomal subunit protein bL35 from Rickettsia akari (strain Hartford).